The sequence spans 166 residues: Regulatory protein RecX (166 aa).

Belongs to the RecX family.

Its subcellular location is the cytoplasm. In terms of biological role, modulates RecA activity. This Salmonella agona (strain SL483) protein is Regulatory protein RecX.